The sequence spans 102 residues: uncharacterized protein (102 aa).

Residues Thr-27–Phe-47 traverse the membrane as a helical segment.

It is found in the membrane. This is an uncharacterized protein from Saccharomyces cerevisiae (strain ATCC 204508 / S288c) (Baker's yeast).